Here is a 116-residue protein sequence, read N- to C-terminus: uncharacterized protein (116 aa).

2 helical membrane-spanning segments follow: residues 55-77 (LSYSYHVIVYLCVLCKVYILYSF) and 87-109 (FSYGSSLLYSLCSNLYIYIYAAL).

The protein localises to the membrane. This is an uncharacterized protein from Saccharomyces cerevisiae (strain ATCC 204508 / S288c) (Baker's yeast).